The sequence spans 145 residues: D-aminoacyl-tRNA deacylase (145 aa).

Residues 137 to 138 carry the Gly-cisPro motif, important for rejection of L-amino acids motif; it reads GP.

The protein belongs to the DTD family. As to quaternary structure, homodimer.

It is found in the cytoplasm. The catalysed reaction is glycyl-tRNA(Ala) + H2O = tRNA(Ala) + glycine + H(+). It carries out the reaction a D-aminoacyl-tRNA + H2O = a tRNA + a D-alpha-amino acid + H(+). Its function is as follows. An aminoacyl-tRNA editing enzyme that deacylates mischarged D-aminoacyl-tRNAs. Also deacylates mischarged glycyl-tRNA(Ala), protecting cells against glycine mischarging by AlaRS. Acts via tRNA-based rather than protein-based catalysis; rejects L-amino acids rather than detecting D-amino acids in the active site. By recycling D-aminoacyl-tRNA to D-amino acids and free tRNA molecules, this enzyme counteracts the toxicity associated with the formation of D-aminoacyl-tRNA entities in vivo and helps enforce protein L-homochirality. This chain is D-aminoacyl-tRNA deacylase, found in Deinococcus radiodurans (strain ATCC 13939 / DSM 20539 / JCM 16871 / CCUG 27074 / LMG 4051 / NBRC 15346 / NCIMB 9279 / VKM B-1422 / R1).